Here is a 318-residue protein sequence, read N- to C-terminus: NADH-ubiquinone oxidoreductase chain 1 (318 aa).

8 helical membrane-spanning segments follow: residues 2 to 22, 70 to 90, 102 to 122, 147 to 167, 171 to 191, 222 to 242, 253 to 273, and 294 to 314; these read FLTNLLMTIAPVLLAVAFLTL, MFLMAPTLALALALTMWIPLP, LLFMLAMSSLAVYAILWSGWA, AIILLSVLLLSGSYSLSTLII, YMWLILPSWPLAMMWFISTLA, LFFLAEYTNIIMMNALTTILF, ELYTINFTTKTLLLTMAFLWI, and LPLTLALCMWYTALPIITAAI.

This sequence belongs to the complex I subunit 1 family.

The protein resides in the mitochondrion inner membrane. It carries out the reaction a ubiquinone + NADH + 5 H(+)(in) = a ubiquinol + NAD(+) + 4 H(+)(out). In terms of biological role, core subunit of the mitochondrial membrane respiratory chain NADH dehydrogenase (Complex I) that is believed to belong to the minimal assembly required for catalysis. Complex I functions in the transfer of electrons from NADH to the respiratory chain. The immediate electron acceptor for the enzyme is believed to be ubiquinone. In Diaemus youngi (White-winged vampire bat), this protein is NADH-ubiquinone oxidoreductase chain 1 (MT-ND1).